A 65-amino-acid polypeptide reads, in one-letter code: Large ribosomal subunit protein bL35 (65 aa).

The disordered stretch occupies residues 1–29 (MPKMKTNRGAAKRFKKTGSGRIKRGKAFT). The span at 10–26 (AAKRFKKTGSGRIKRGK) shows a compositional bias: basic residues.

The protein belongs to the bacterial ribosomal protein bL35 family.

The polypeptide is Large ribosomal subunit protein bL35 (Desulfotalea psychrophila (strain LSv54 / DSM 12343)).